A 126-amino-acid chain; its full sequence is Large ribosomal subunit protein bL20c (126 aa).

Belongs to the bacterial ribosomal protein bL20 family.

It is found in the plastid. The protein resides in the chloroplast. Binds directly to 23S ribosomal RNA and is necessary for the in vitro assembly process of the 50S ribosomal subunit. It is not involved in the protein synthesizing functions of that subunit. The chain is Large ribosomal subunit protein bL20c from Pelargonium hortorum (Common geranium).